The primary structure comprises 526 residues: Amine oxidase [flavin-containing] A (526 aa).

An N-acetylmethionine modification is found at methionine 1. The Cytoplasmic portion of the chain corresponds to 1–497 (MTDLEKPNLA…HTFLERNLPS (497 aa)). Serine 383 carries the phosphoserine modification. At cysteine 406 the chain carries S-8alpha-FAD cysteine. The helical; Anchor for type IV membrane protein transmembrane segment at 498 to 518 (VPGLLKITGVSTSVALLCFVL) threads the bilayer. At 519–526 (YKIKKLPC) the chain is on the mitochondrial intermembrane side. Residues 520-522 (KIK) are interaction with membrane phospholipid headgroups.

This sequence belongs to the flavin monoamine oxidase family. Monomer, homo- or heterodimer (containing two subunits of similar size). Each subunit contains a covalently bound flavin. Enzymatically active as monomer. FAD is required as a cofactor.

It localises to the mitochondrion outer membrane. The catalysed reaction is a secondary aliphatic amine + O2 + H2O = a primary amine + an aldehyde + H2O2. It catalyses the reaction a primary methyl amine + O2 + H2O = an aldehyde + H2O2 + NH4(+). It carries out the reaction (R)-adrenaline + O2 + H2O = (R)-3,4-dihydroxymandelaldehyde + methylamine + H2O2. The enzyme catalyses dopamine + O2 + H2O = 3,4-dihydroxyphenylacetaldehyde + H2O2 + NH4(+). The catalysed reaction is tyramine + O2 + H2O = (4-hydroxyphenyl)acetaldehyde + H2O2 + NH4(+). It catalyses the reaction (R)-noradrenaline + O2 + H2O = (R)-3,4-dihydroxymandelaldehyde + H2O2 + NH4(+). It carries out the reaction serotonin + O2 + H2O = (5-hydroxyindol-3-yl)acetaldehyde + H2O2 + NH4(+). The enzyme catalyses kynuramine + O2 + H2O = 3-(2-aminophenyl)-3-oxopropanal + H2O2 + NH4(+). The catalysed reaction is tryptamine + O2 + H2O = indole-3-acetaldehyde + H2O2 + NH4(+). It catalyses the reaction 2-phenylethylamine + O2 + H2O = 2-phenylacetaldehyde + H2O2 + NH4(+). Its function is as follows. Catalyzes the oxidative deamination of primary and some secondary amine such as neurotransmitters, with concomitant reduction of oxygen to hydrogen peroxide and has important functions in the metabolism of neuroactive and vasoactive amines in the central nervous system and peripheral tissues. Preferentially oxidizes serotonin. Also catalyzes the oxidative deamination of kynuramine to 3-(2-aminophenyl)-3-oxopropanal that can spontaneously condense to 4-hydroxyquinoline. This Rattus norvegicus (Rat) protein is Amine oxidase [flavin-containing] A.